The chain runs to 74 residues: U12-theraphotoxin-Hs1a (74 aa).

Residues 1-20 (MNVKILLLLVGLNLVMHSNA) form the signal peptide. The propeptide occupies 21-40 (TGDSETNPAETLFIEEIFRR). Disulfide bonds link Cys-42/Cys-56, Cys-49/Cys-61, and Cys-55/Cys-71.

This sequence belongs to the neurotoxin 35 family. As to expression, expressed by the venom gland.

Its subcellular location is the secreted. Its function is as follows. Putative ion channel inhibitor. The protein is U12-theraphotoxin-Hs1a of Cyriopagopus schmidti (Chinese bird spider).